Reading from the N-terminus, the 201-residue chain is Increased recombination centers protein 21 (201 aa).

The region spanning 122–200 is the Cytochrome b5 heme-binding domain; it reads PLRINRKIVK…LQVCFIGVVC (79 aa). The heme site is built by His-158 and His-182.

The protein belongs to the cytochrome b5 family.

In terms of biological role, involved in resistance to carboplatin and cisplatin. Is probably involved in a pathway contributing to genomic integrity. The sequence is that of Increased recombination centers protein 21 (IRC21) from Saccharomyces cerevisiae (strain ATCC 204508 / S288c) (Baker's yeast).